The primary structure comprises 575 residues: Chaperonin CPN60-2, mitochondrial (575 aa).

A mitochondrion-targeting transit peptide spans 1-32 (MHRFASGLASKARLARKGANQIASRSSWSRNY).

This sequence belongs to the chaperonin (HSP60) family.

It localises to the mitochondrion. Its function is as follows. Implicated in mitochondrial protein import and macromolecular assembly. May facilitate the correct folding of imported proteins. May also prevent misfolding and promote the refolding and proper assembly of unfolded polypeptides generated under stress conditions in the mitochondrial matrix. This is Chaperonin CPN60-2, mitochondrial (CPN60-2) from Cucurbita maxima (Pumpkin).